A 179-amino-acid chain; its full sequence is Translation initiation factor IF-3 (179 aa).

Belongs to the IF-3 family. In terms of assembly, monomer.

The protein resides in the cytoplasm. In terms of biological role, IF-3 binds to the 30S ribosomal subunit and shifts the equilibrium between 70S ribosomes and their 50S and 30S subunits in favor of the free subunits, thus enhancing the availability of 30S subunits on which protein synthesis initiation begins. This chain is Translation initiation factor IF-3, found in Treponema pallidum (strain Nichols).